Reading from the N-terminus, the 401-residue chain is Mu-type opioid receptor (401 aa).

The Extracellular portion of the chain corresponds to 1-69 (MDSSADPRNA…CPPTGSPSMV (69 aa)). N-linked (GlcNAc...) asparagine glycans are attached at residues Asn-9, Asn-12, Asn-34, Asn-41, and Asn-49. A helical membrane pass occupies residues 70 to 94 (TAITIMALYSIVCVVGLFGNFLVMY). The Cytoplasmic portion of the chain corresponds to 95 to 107 (VIVRYTKMKTATN). Residues 108-132 (IYIFNLALADALATSTLPFQSVNYL) form a helical membrane-spanning segment. The Extracellular segment spans residues 133–143 (MGTWPFGTILC). Cys-143 and Cys-220 are disulfide-bonded. The helical transmembrane segment at 144 to 166 (KIVISIDYYNMFTSIFTLCTMSV) threads the bilayer. At 167-186 (DRYIAVCHPVKALDFRTPRN) the chain is on the cytoplasmic side. Tyr-169 is subject to Phosphotyrosine. A helical membrane pass occupies residues 187-208 (AKIINVCNWILSSAIGLPVMFM). The Extracellular portion of the chain corresponds to 209–231 (ATTKYRNGSIDCALTFSHPTWYW). A helical membrane pass occupies residues 232–256 (ENLLKICVFIFAFIMPVLIITVCYG). The Cytoplasmic portion of the chain corresponds to 257 to 280 (LMILRLKSVRMLSGSKEKDRNLRR). A helical transmembrane segment spans residues 281 to 307 (ITRMVLVVVAVFIVCWTPIHIYVIIKA). Over 308 to 315 (LITIPETT) the chain is Extracellular. Residues 316–339 (FQTVSWHFCIALGYTNSCLNPVLY) form a helical membrane-spanning segment. The NPxxY; plays a role in stabilizing the activated conformation of the receptor signature appears at 335 to 339 (NPVLY). Residues 340-401 (AFLDENFKRC…NLEAETAPLP (62 aa)) lie on the Cytoplasmic side of the membrane. Cys-354 carries S-palmitoyl cysteine lipidation. Residues 365 to 385 (NSARIRQNTRDHPSTANTVDR) form a disordered region. Ser-366 carries the phosphoserine modification. The residue at position 373 (Thr-373) is a Phosphothreonine. A Phosphoserine modification is found at Ser-378. Thr-397 is subject to Phosphothreonine.

Belongs to the G-protein coupled receptor 1 family. As to quaternary structure, forms homooligomers and heterooligomers with other GPCRs, such as OPRD1, OPRK1, OPRL1, NPFFR2, ADRA2A, SSTR2, CNR1 and CCR5 (probably in dimeric forms). Interacts with heterotrimeric G proteins; interaction with a heterotrimeric complex containing GNAI1, GNB1 and GNG2 stabilizes the active conformation of the receptor and increases its affinity for endomorphin-2, the synthetic opioid peptide DAMGO and for morphinan agonists. Interacts with PPL; the interaction disrupts agonist-mediated G-protein activation. Interacts (via C-terminus) with DNAJB4 (via C-terminus). Interacts with calmodulin; the interaction inhibits the constitutive activity of OPRM1; it abolishes basal and attenuates agonist-stimulated G-protein coupling. Interacts with FLNA, PLD2, RANBP9 and WLS and GPM6A. Interacts with RTP4. Interacts with SYP and GNAS. Interacts with RGS9, RGS17, RGS20, RGS4, PPP1R9B and HINT1. In terms of processing, phosphorylated. Differentially phosphorylated in basal and agonist-induced conditions. Agonist-mediated phosphorylation modulates receptor internalization. Phosphorylated by GRK2 in a agonist-dependent manner. Phosphorylation at Tyr-169 requires receptor activation, is dependent on non-receptor protein tyrosine kinase Src and results in a decrease in agonist efficacy by reducing G-protein coupling efficiency. Phosphorylated on tyrosine residues; the phosphorylation is involved in agonist-induced G-protein-independent receptor down-regulation. Phosphorylation at Ser-378 is involved in G-protein-dependent but not beta-arrestin-dependent activation of the ERK pathway. Post-translationally, ubiquitinated. A basal ubiquitination seems not to be related to degradation. Ubiquitination is increased upon formation of OPRM1:OPRD1 oligomers leading to proteasomal degradation; the ubiquitination is diminished by RTP4.

It is found in the cell membrane. The protein resides in the cell projection. It localises to the axon. The protein localises to the perikaryon. Its subcellular location is the dendrite. It is found in the endosome. In terms of biological role, receptor for endogenous opioids such as beta-endorphin and endomorphin. Receptor for natural and synthetic opioids including morphine, heroin, DAMGO, fentanyl, etorphine, buprenorphin and methadone. Also activated by enkephalin peptides, such as Met-enkephalin or Met-enkephalin-Arg-Phe, with higher affinity for Met-enkephalin-Arg-Phe. Agonist binding to the receptor induces coupling to an inactive GDP-bound heterotrimeric G-protein complex and subsequent exchange of GDP for GTP in the G-protein alpha subunit leading to dissociation of the G-protein complex with the free GTP-bound G-protein alpha and the G-protein beta-gamma dimer activating downstream cellular effectors. The agonist- and cell type-specific activity is predominantly coupled to pertussis toxin-sensitive G(i) and G(o) G alpha proteins, GNAI1, GNAI2, GNAI3 and GNAO1, and to a lesser extent to pertussis toxin-insensitive G alpha proteins GNAZ and GNA15. They mediate an array of downstream cellular responses, including inhibition of adenylate cyclase activity and both N-type and L-type calcium channels, activation of inward rectifying potassium channels, mitogen-activated protein kinase (MAPK), phospholipase C (PLC), phosphoinositide/protein kinase (PKC), phosphoinositide 3-kinase (PI3K) and regulation of NF-kappa-B. Also couples to adenylate cyclase stimulatory G alpha proteins. The selective temporal coupling to G-proteins and subsequent signaling can be regulated by RGSZ proteins, such as RGS9, RGS17 and RGS4. Phosphorylation by members of the GPRK subfamily of Ser/Thr protein kinases and association with beta-arrestins is involved in short-term receptor desensitization. Beta-arrestins associate with the GPRK-phosphorylated receptor and uncouple it from the G-protein thus terminating signal transduction. The phosphorylated receptor is internalized through endocytosis via clathrin-coated pits which involves beta-arrestins. The activation of the ERK pathway occurs either in a G-protein-dependent or a beta-arrestin-dependent manner and is regulated by agonist-specific receptor phosphorylation. Acts as a class A G-protein coupled receptor (GPCR) which dissociates from beta-arrestin at or near the plasma membrane and undergoes rapid recycling. Receptor down-regulation pathways are varying with the agonist and occur dependent or independent of G-protein coupling. Endogenous ligands induce rapid desensitization, endocytosis and recycling. Heterooligomerization with other GPCRs can modulate agonist binding, signaling and trafficking properties. Involved in neurogenesis. This Sus scrofa (Pig) protein is Mu-type opioid receptor (OPRM1).